Reading from the N-terminus, the 377-residue chain is Chaperone protein DnaJ (377 aa).

The J domain occupies 5–70 (DFYETLGVSK…QKRAAYDRFG (66 aa)). The CR-type zinc finger occupies 138–216 (GKTAQIRVPT…CHGQGRVTEE (79 aa)). Zn(2+) contacts are provided by C151, C154, C168, C171, C190, C193, C204, and C207. CXXCXGXG motif repeat units follow at residues 151–158 (CDVCSGSG), 168–175 (CATCQGSG), 190–197 (CPTCHGRG), and 204–211 (CGKCHGQG).

It belongs to the DnaJ family. In terms of assembly, homodimer. Zn(2+) serves as cofactor.

It localises to the cytoplasm. In terms of biological role, participates actively in the response to hyperosmotic and heat shock by preventing the aggregation of stress-denatured proteins and by disaggregating proteins, also in an autonomous, DnaK-independent fashion. Unfolded proteins bind initially to DnaJ; upon interaction with the DnaJ-bound protein, DnaK hydrolyzes its bound ATP, resulting in the formation of a stable complex. GrpE releases ADP from DnaK; ATP binding to DnaK triggers the release of the substrate protein, thus completing the reaction cycle. Several rounds of ATP-dependent interactions between DnaJ, DnaK and GrpE are required for fully efficient folding. Also involved, together with DnaK and GrpE, in the DNA replication of plasmids through activation of initiation proteins. In Agrobacterium fabrum (strain C58 / ATCC 33970) (Agrobacterium tumefaciens (strain C58)), this protein is Chaperone protein DnaJ.